The following is a 524-amino-acid chain: Probable inorganic phosphate transporter 1-2 (524 aa).

At Met1–Ala24 the chain is on the cytoplasmic side. The chain crosses the membrane as a helical span at residues Ile25–Val45. Topologically, residues Thr46–Ala70 are extracellular. The chain crosses the membrane as a helical span at residues Ala71–Leu91. Residues Gly92 to Lys99 lie on the Cytoplasmic side of the membrane. Residues Val100–Gly120 traverse the membrane as a helical segment. Topologically, residues Asn121–Cys131 are extracellular. Residues Phe132 to Met152 form a helical membrane-spanning segment. Residues Ser153–Arg161 are Cytoplasmic-facing. A helical transmembrane segment spans residues Gly162–Val182. Residues Ala183–Val211 are Extracellular-facing. The helical transmembrane segment at Asp212–Trp232 threads the bilayer. Residues Arg233–Arg292 are Cytoplasmic-facing. A helical membrane pass occupies residues His293–Ser313. Over Gln314–Thr348 the chain is Extracellular. A helical membrane pass occupies residues Leu349 to Ile369. Residues Gly370–Arg371 are Cytoplasmic-facing. The chain crosses the membrane as a helical span at residues Phe372 to Pro392. Topologically, residues Tyr393 to Arg402 are extracellular. A helical transmembrane segment spans residues Ile403–Thr423. At Thr424–His441 the chain is on the cytoplasmic side. Residues Gly442–Ala462 form a helical membrane-spanning segment. The Extracellular segment spans residues Ala463–Ser484. Residues Leu485–Pro505 form a helical membrane-spanning segment. The Cytoplasmic segment spans residues Lys506–Lys524.

It belongs to the major facilitator superfamily. Phosphate:H(+) symporter (TC 2.A.1.9) family. Root specific, especially in trichoblasts. In mature plants, localized in root cortical cells and young lateral roots.

It localises to the membrane. Its function is as follows. High-affinity transporter for external inorganic phosphate. In Arabidopsis thaliana (Mouse-ear cress), this protein is Probable inorganic phosphate transporter 1-2 (PHT1-2).